We begin with the raw amino-acid sequence, 94 residues long: Small ribosomal subunit protein uS19 (94 aa).

The protein belongs to the universal ribosomal protein uS19 family.

In terms of biological role, protein S19 forms a complex with S13 that binds strongly to the 16S ribosomal RNA. This Hamiltonella defensa subsp. Acyrthosiphon pisum (strain 5AT) protein is Small ribosomal subunit protein uS19.